Reading from the N-terminus, the 123-residue chain is Small ribosomal subunit protein uS12 (123 aa).

The disordered stretch occupies residues 1–32; it reads MPTIQQLVRKGRKTKVSKNKTPALKGSPQRRG. Residues 9-18 show a composition bias toward basic residues; it reads RKGRKTKVSK. Residue Asp-89 is modified to 3-methylthioaspartic acid.

The protein belongs to the universal ribosomal protein uS12 family. As to quaternary structure, part of the 30S ribosomal subunit. Contacts proteins S8 and S17. May interact with IF1 in the 30S initiation complex.

In terms of biological role, with S4 and S5 plays an important role in translational accuracy. Its function is as follows. Interacts with and stabilizes bases of the 16S rRNA that are involved in tRNA selection in the A site and with the mRNA backbone. Located at the interface of the 30S and 50S subunits, it traverses the body of the 30S subunit contacting proteins on the other side and probably holding the rRNA structure together. The combined cluster of proteins S8, S12 and S17 appears to hold together the shoulder and platform of the 30S subunit. This chain is Small ribosomal subunit protein uS12, found in Thermobifida fusca (strain YX).